The following is a 589-amino-acid chain: ATP-dependent lipid A-core flippase (589 aa).

5 helical membrane passes run 29-49 (WLLV…STFL), 68-88 (ALWL…AGYI), 157-177 (VIGA…AILL), 254-274 (LSSA…LLIA), and 283-303 (LSPG…PALK). In terms of domain architecture, ABC transmembrane type-1 spans 32–314 (VVAACGALLE…LTNVQNMLQS (283 aa)). The ABC transporter domain occupies 346 to 582 (IEFRGITARY…DGLYAYLYSM (237 aa)). 380 to 387 (GRSGSGKS) contributes to the ATP binding site.

This sequence belongs to the ABC transporter superfamily. Lipid exporter (TC 3.A.1.106) family. As to quaternary structure, homodimer.

Its subcellular location is the cell inner membrane. It carries out the reaction ATP + H2O + lipid A-core oligosaccharideSide 1 = ADP + phosphate + lipid A-core oligosaccharideSide 2.. Involved in lipopolysaccharide (LPS) biosynthesis. Translocates lipid A-core from the inner to the outer leaflet of the inner membrane. Transmembrane domains (TMD) form a pore in the inner membrane and the ATP-binding domain (NBD) is responsible for energy generation. The protein is ATP-dependent lipid A-core flippase of Xylella fastidiosa (strain 9a5c).